A 20-amino-acid polypeptide reads, in one-letter code: Dahlein-5.1 (20 aa).

As to expression, expressed by the skin dorsal glands.

The protein localises to the secreted. Its function is as follows. Has no antimicrobial activity. Strongly inhibits the formation of NO by neuronal nitric oxide synthase at micromolar concentrations. Acts by a non-competitive mechanism, probably by binding to calcium/calmodulin and as a consequence blocking calmodulin attachment to nNOS. This is Dahlein-5.1 from Ranoidea dahlii (Dahl's aquatic frog).